A 985-amino-acid polypeptide reads, in one-letter code: MSTGLTPPPQPIKRPPKAVTWIFAIIALIILIAPMSVGFYTDWLWFGEVDFRGVFSKVIVTRIVLFVIFALIAGFVTWLAGYFVTKLRPDEMSAFDTQSPVYQYRQMIENSLRRVMVLIPIFVALLAGLIGQRSWRTVQMWMNGQSFGVSDQQFGHDYGFYAFDLPMLRLVTDSLSMMLIVAFLIALVGHYLMGGIRAGNQMTGQKSFVSRGARTQLAVTAGLWMLVKVAGYWLDRYDLLTKENSTFTGASYTDINAQLPAKIILLVIALFVAIAFFSAIFLKDLRIPGLAVVLMLLSSVIIGAAWPLMLERFSVQPNRAEKEAEYISRNIESTRYAYGITDEDVTYEENWGAGETTNEEVAADSATISNIRLLDPQILSPTFTQQQQLRNFYGFPDQLAMDRFEVDGELRDFVVAARELDPNALQQNQQDWINRHTVYTHGNGFIAAQANQVDEVARDVGSTRGGYPVYTVSDLQSNARAAESEDAEQLGIKVDEPRVYYGPLIASATDGADYAIVGDTGDGPVEYDTDTSSYTYEGAGGVDIGNMVNRAMFALRYQEMNMLLSDRVGSESKILFERDPRSRVEKVAPWLTTDSKTYPTVIDGRIKWIVDGYTTLDSLPYSTRTSLTEATQDAVMPDGTPQPLITDKVGYIRNSVKAVVDAYDGTVELYEFDTEDPVLKAWRGVFPDTVKDESEISDELRAHLRYPEDLFKVQRDMLSKYHVDDSGTFFTNDAFWSVPGDPTAAEGRQELKQPPYYVVAADPETGESSFQLITPFRGLQREYLSAHMSASSDPNTYGEITVRVLPTDSVTQGPKQAQDAMMSSDQVAQDQTLWRGSNDLHNGNLLTLPVGGGEILYVEPIYSQRKDQASAFPKLLRVLVFYKGQVGYAPTIAEALSQVGIDPKAAQDIEEVDGTTTTPSTDETDTDTDQPATETPTAPVSEAEGIAAINDALSNLEAARDGSFEEYGRALDALDRAVDSYQSAQ.

The next 7 membrane-spanning stretches (helical) occupy residues 19-39 (VTWI…SVGF), 63-83 (IVLF…AGYF), 115-135 (VMVL…QRSW), 176-196 (SMML…MGGI), 215-235 (TQLA…YWLD), 262-282 (KIIL…AIFL), and 290-310 (LAVV…PLML). Positions 906-944 (AQDIEEVDGTTTTPSTDETDTDTDQPATETPTAPVSEAE) are disordered. Residues 929-939 (DQPATETPTAP) are compositionally biased toward low complexity.

The protein belongs to the UPF0182 family.

The protein resides in the cell membrane. The polypeptide is UPF0182 protein cgR_0895 (Corynebacterium glutamicum (strain R)).